Here is a 392-residue protein sequence, read N- to C-terminus: Probable tRNA sulfurtransferase (392 aa).

Positions 59–166 constitute a THUMP domain; the sequence is DEIIERVKKV…ECSFVFTKKV (108 aa). ATP is bound by residues 183–184, 208–209, Arg265, Gly287, and Gln296; these read LL and HF.

Belongs to the ThiI family.

Its subcellular location is the cytoplasm. The catalysed reaction is [ThiI sulfur-carrier protein]-S-sulfanyl-L-cysteine + a uridine in tRNA + 2 reduced [2Fe-2S]-[ferredoxin] + ATP + H(+) = [ThiI sulfur-carrier protein]-L-cysteine + a 4-thiouridine in tRNA + 2 oxidized [2Fe-2S]-[ferredoxin] + AMP + diphosphate. It carries out the reaction [ThiS sulfur-carrier protein]-C-terminal Gly-Gly-AMP + S-sulfanyl-L-cysteinyl-[cysteine desulfurase] + AH2 = [ThiS sulfur-carrier protein]-C-terminal-Gly-aminoethanethioate + L-cysteinyl-[cysteine desulfurase] + A + AMP + 2 H(+). Its pathway is cofactor biosynthesis; thiamine diphosphate biosynthesis. Catalyzes the ATP-dependent transfer of a sulfur to tRNA to produce 4-thiouridine in position 8 of tRNAs, which functions as a near-UV photosensor. Also catalyzes the transfer of sulfur to the sulfur carrier protein ThiS, forming ThiS-thiocarboxylate. This is a step in the synthesis of thiazole, in the thiamine biosynthesis pathway. The sulfur is donated as persulfide by IscS. The sequence is that of Probable tRNA sulfurtransferase from Alkaliphilus metalliredigens (strain QYMF).